The primary structure comprises 214 residues: Orotate phosphoribosyltransferase (214 aa).

Residue Lys-26 coordinates 5-phospho-alpha-D-ribose 1-diphosphate. Position 34-35 (34-35 (FF)) interacts with orotate. 5-phospho-alpha-D-ribose 1-diphosphate-binding positions include 72-73 (YK), Arg-99, Lys-100, Lys-103, His-105, and 124-132 (DDVITAGTA). Orotate is bound by residues Thr-128 and Arg-156.

This sequence belongs to the purine/pyrimidine phosphoribosyltransferase family. PyrE subfamily. As to quaternary structure, homodimer. Mg(2+) is required as a cofactor.

It carries out the reaction orotidine 5'-phosphate + diphosphate = orotate + 5-phospho-alpha-D-ribose 1-diphosphate. It participates in pyrimidine metabolism; UMP biosynthesis via de novo pathway; UMP from orotate: step 1/2. Functionally, catalyzes the transfer of a ribosyl phosphate group from 5-phosphoribose 1-diphosphate to orotate, leading to the formation of orotidine monophosphate (OMP). This Proteus mirabilis (strain HI4320) protein is Orotate phosphoribosyltransferase.